The primary structure comprises 756 residues: Polyribonucleotide nucleotidyltransferase (756 aa).

2 residues coordinate Mg(2+): D547 and D553. In terms of domain architecture, KH spans 613 to 672; the sequence is PRITSVTIPVNKIGELIGPKGKTINAITEETGADVSIEEDGTVYISAATGEAADAAIDRV. One can recognise an S1 motif domain in the interval 684-753; sequence GERFLGTVVK…NRGKISLVPV (70 aa).

The protein belongs to the polyribonucleotide nucleotidyltransferase family. It depends on Mg(2+) as a cofactor.

The protein resides in the cytoplasm. The catalysed reaction is RNA(n+1) + phosphate = RNA(n) + a ribonucleoside 5'-diphosphate. Involved in mRNA degradation. Catalyzes the phosphorolysis of single-stranded polyribonucleotides processively in the 3'- to 5'-direction. This chain is Polyribonucleotide nucleotidyltransferase, found in Corynebacterium aurimucosum (strain ATCC 700975 / DSM 44827 / CIP 107346 / CN-1) (Corynebacterium nigricans).